The chain runs to 153 residues: Facilitator of iron transport 2 (153 aa).

The first 18 residues, 1 to 18 (MKFSTIFGATTVMTAVSA), serve as a signal peptide directing secretion. Positions 73-98 (TEGPDTTSEKSTTKTLTLTNGSGSST) are disordered. A compositionally biased stretch (low complexity) spans 85–98 (TKTLTLTNGSGSST). The N-linked (GlcNAc...) asparagine glycan is linked to N92. The GPI-anchor amidated glycine moiety is linked to residue G130. A propeptide spans 131 to 153 (AAPAAFQGASVGALALGLISYLL) (removed in mature form).

In terms of processing, the GPI-anchor is attached to the protein in the endoplasmic reticulum and serves to target the protein to the cell surface. There, the glucosamine-inositol phospholipid moiety is cleaved off and the GPI-modified mannoprotein is covalently attached via its lipidless GPI glycan remnant to the 1,6-beta-glucan of the outer cell wall layer.

Its subcellular location is the secreted. It localises to the cell wall. The protein resides in the membrane. Its function is as follows. Involved in the uptake of non-siderophore and siderophore sources of iron. Has a role in the retention of iron in the cell wall and periplasmic space. The polypeptide is Facilitator of iron transport 2 (FIT2) (Saccharomyces cerevisiae (strain ATCC 204508 / S288c) (Baker's yeast)).